We begin with the raw amino-acid sequence, 363 residues long: Flagellar P-ring protein (363 aa).

Positions 1–20 are cleaved as a signal peptide; it reads MKLKLILAVAMLAFSLPSQA.

This sequence belongs to the FlgI family. The basal body constitutes a major portion of the flagellar organelle and consists of four rings (L,P,S, and M) mounted on a central rod.

It is found in the periplasm. The protein localises to the bacterial flagellum basal body. In terms of biological role, assembles around the rod to form the L-ring and probably protects the motor/basal body from shearing forces during rotation. The protein is Flagellar P-ring protein of Shewanella sp. (strain MR-7).